Consider the following 149-residue polypeptide: Large ribosomal subunit protein uL13 (149 aa).

It belongs to the universal ribosomal protein uL13 family. In terms of assembly, part of the 50S ribosomal subunit.

Its function is as follows. This protein is one of the early assembly proteins of the 50S ribosomal subunit, although it is not seen to bind rRNA by itself. It is important during the early stages of 50S assembly. In Chlorobium phaeovibrioides (strain DSM 265 / 1930) (Prosthecochloris vibrioformis (strain DSM 265)), this protein is Large ribosomal subunit protein uL13.